Reading from the N-terminus, the 85-residue chain is Translation initiation factor IF-1 1 (85 aa).

The region spanning 1-72 (MAKEELIEMS…SKGRITFRHL (72 aa)) is the S1-like domain.

It belongs to the IF-1 family. Component of the 30S ribosomal translation pre-initiation complex which assembles on the 30S ribosome in the order IF-2 and IF-3, IF-1 and N-formylmethionyl-tRNA(fMet); mRNA recruitment can occur at any time during PIC assembly.

The protein localises to the cytoplasm. Its function is as follows. One of the essential components for the initiation of protein synthesis. Stabilizes the binding of IF-2 and IF-3 on the 30S subunit to which N-formylmethionyl-tRNA(fMet) subsequently binds. Helps modulate mRNA selection, yielding the 30S pre-initiation complex (PIC). Upon addition of the 50S ribosomal subunit IF-1, IF-2 and IF-3 are released leaving the mature 70S translation initiation complex. The polypeptide is Translation initiation factor IF-1 1 (Aromatoleum aromaticum (strain DSM 19018 / LMG 30748 / EbN1) (Azoarcus sp. (strain EbN1))).